A 449-amino-acid chain; its full sequence is FAD-linked oxidoreductase janO (449 aa).

Residues 32–203 (PDAQPLAIIK…TRFHLNTRPL (172 aa)) form the FAD-binding PCMH-type domain.

This sequence belongs to the oxygen-dependent FAD-linked oxidoreductase family. The cofactor is FAD.

The protein operates within secondary metabolite biosynthesis. In terms of biological role, FAD-linked oxidoreductase; part of the gene cluster that mediates the biosynthesis of the indole diterpenes janthitremanes such as shearinine K or shearinine A. The geranylgeranyl diphosphate (GGPP) synthase janG catalyzes the first step in janthitremane biosynthesis via conversion of farnesyl pyrophosphate and isopentyl pyrophosphate into geranylgeranyl pyrophosphate (GGPP). Condensation of indole-3-glycerol phosphate with GGPP by the prenyl transferase janC then forms 3-geranylgeranylindole (3-GGI). Epoxidation by the FAD-dependent monooxygenase janM leads to a epoxidized-GGI that is substrate of the terpene cyclase janB for cyclization to yield paspaline. Paspaline is subsequently converted to 13-desoxypaspaline by the cytochrome P450 monooxygenase janP, via beta-PC-M6 in a series of alpha-face oxidations. The cytochrome P450 monooxygenase janQ is proposed to carry out sequential beta-face oxidation steps at C-7 and C-13 of 13-desoxypaspaline to form paspalicine and paspalinine respectively. The indole diterpene prenyltransferase janD may then convert paspalinine into shearinine K which is substrate of janO and/or additional enzymes for oxidation and cyclization to generate shearinine A. The chain is FAD-linked oxidoreductase janO from Penicillium janthinellum (Penicillium vitale).